Reading from the N-terminus, the 704-residue chain is Plasma membrane ATPase 2 (704 aa).

The chain crosses the membrane as a helical span at residues 1 to 16 (CSIAVGMIIEIIVMYP). Residues 17–26 (IQHRKYRPGI) lie on the Extracellular side of the membrane. A helical transmembrane segment spans residues 27–48 (DNLLVLLIGGIPIAMPTVLSVT). The Cytoplasmic segment spans residues 49–395 (MAIGSHRLAQ…TSRAIFQRMK (347 aa)). Catalysis depends on aspartate 81, which acts as the 4-aspartylphosphate intermediate. Mg(2+) is bound by residues aspartate 340 and aspartate 344. Residues 396-417 (NYTIYAVSITIRIVLGFMLLAL) traverse the membrane as a helical segment. Over 418–422 (IWKFD) the chain is Extracellular. Residues 423-445 (FPPFMVLIIAILNDGTIMTISKD) traverse the membrane as a helical segment. At 446–461 (RVKPSPLPDSWKLAEI) the chain is on the cytoplasmic side. The helical transmembrane segment at 462–482 (FTTGVVLGGYLAMMTVIFFWA) threads the bilayer. Topologically, residues 483-507 (AYETQFFPRVFGVSTLQRTATDDFR) are extracellular. Residues 508 to 528 (KLASAIYLQVSTISQALIFVT) traverse the membrane as a helical segment. Residues 529–540 (RSRSWSFVERPG) lie on the Cytoplasmic side of the membrane. Residues 541-561 (LLLVVALIVAQLVATLIAVYA) form a helical membrane-spanning segment. Residues 562 to 570 (SWSFAAIEG) are Extracellular-facing. A helical membrane pass occupies residues 571 to 591 (IGWGWAGVIWLYNLVFYFPLD). Over 592 to 704 (IIKFLIRYAL…IETIQQSYTV (113 aa)) the chain is Cytoplasmic.

The protein belongs to the cation transport ATPase (P-type) (TC 3.A.3) family. Type IIIA subfamily. Possibly exists as a homodimer or a homotrimer.

The protein localises to the cell membrane. It carries out the reaction ATP + H2O + H(+)(in) = ADP + phosphate + 2 H(+)(out). The plasma membrane ATPase of plants and fungi is a hydrogen ion pump. The proton gradient it generates drives the active transport of nutrients by H(+)-symport. The resulting external acidification and/or internal alkinization may mediate growth responses. The sequence is that of Plasma membrane ATPase 2 (LHA2) from Solanum lycopersicum (Tomato).